Consider the following 509-residue polypeptide: Inositol-3-phosphate synthase 1 (509 aa).

This sequence belongs to the myo-inositol 1-phosphate synthase family. Requires NAD(+) as cofactor. Highly expressed in anthers, but transcripts are undetectable in roots, leaves, flowers and embryos.

It is found in the cytoplasm. It catalyses the reaction D-glucose 6-phosphate = 1D-myo-inositol 3-phosphate. It functions in the pathway polyol metabolism; myo-inositol biosynthesis; myo-inositol from D-glucose 6-phosphate: step 1/2. In terms of biological role, key enzyme in myo-inositol biosynthesis pathway that catalyzes the conversion of glucose 6-phosphate to 1-myo-inositol 1-phosphate in a NAD-dependent manner. Is a key enzyme in the phytic acid biosynthesis pathway in seeds. The chain is Inositol-3-phosphate synthase 1 from Oryza sativa subsp. japonica (Rice).